We begin with the raw amino-acid sequence, 427 residues long: Zinc finger protein 2 (427 aa).

The KRAB domain occupies 14–85 (VTFEDVAVTF…GFHGSEEKTW (72 aa)). A disordered region spans residues 111–142 (HRKQSSLCPKREIQTLTGGPEPEKESPKARTC). 8 C2H2-type zinc fingers span residues 169-191 (QECSECGKTFFDHSSLIRHQRTH), 197-219 (YDCPECGKAFSHRSSLSRHLMFH), 225-247 (YECDACGKAFFDRSSLTVHQRIH), 253-275 (FKCNDCGKAFFDRSSLTRHQRIH), 281-303 (YECQQCGKAFSQKSILTRHLLTH), 309-331 (YECRDCGKAFYGVTSLNRHQKVH), 337-359 (YQCSECGKAFFDRSSLTQHQKIH), and 365-387 (YECGECGKAFSQRCRLTRHQRVH). The C2H2-type 9; degenerate zinc finger occupies 393–415 (FECSVCGKEFSSKSSIIQHQRRY).

Belongs to the krueppel C2H2-type zinc-finger protein family.

The protein localises to the nucleus. In terms of biological role, may be involved in transcriptional regulation. This Mus musculus (Mouse) protein is Zinc finger protein 2.